The sequence spans 736 residues: MEALIPVINKLQDVFNTVGADIIQLPQIVVVGTQSSGKSSVLESLVGRDLLPRGTGIVTRRPLILQLVHVSQEDKRKTTGEENGVEAEEWGKFLHTKNKLYTDFDEIRQEIENETERISGNNKGVSPEPIHLKIFSPNVVNLTLVDLPGMTKVPVGDQPKDIELQIRELILRFISNPNSIILAVTAANTDMATSEALKISREVDPDGRRTLAVITKLDLMDAGTDAMDVLMGRVIPVKLGIIGVVNRSQLDINNKKSVTDSIRDEYAFLQKKYPSLANRNGTKYLARTLNRLLMHHIRDCLPELKTRINVLAAQYQSLLNSYGEPVDDKSATLLQLITKFATEYCNTIEGTAKYIETSELCGGARICYIFHETFGRTLESVDPLGGLNTIDILTAIRNATGPRPALFVPEVSFELLVKRQIKRLEEPSLRCVELVHEEMQRIIQHCSNYSTQELLRFPKLHDAIVEVVTCLLRKRLPVTNEMVHNLVAIELAYINTKHPDFADACGLMNNNIEEQRRNRLARELPSAVSRDKSSKVPSALAPASQEPSPAASAEADGKLIQDSRRETKNVASGGGGVGDGVQEPTTGNWRGMLKTSKAEELLAEEKSKPIPIMPASPQKGHAVNLLDVPVPVARKLSAREQRDCEVIERLIKSYFLIVRKNIQDSVPKAVMHFLVNHVKDTLQSELVGQLYKSSLLDDLLTESEDMAQRRKEAADMLKALQGASQIIAEIRETHLW.

Met1 carries the post-translational modification N-acetylmethionine. In terms of domain architecture, Dynamin-type G spans 22–302 (IIQLPQIVVV…LMHHIRDCLP (281 aa)). The tract at residues 32 to 39 (GTQSSGKS) is G1 motif. 32–40 (GTQSSGKSS) lines the GTP pocket. Positions 58–60 (VTR) are G2 motif. The segment at 146–149 (DLPG) is G3 motif. Positions 215-218 (TKLD) are G4 motif. Residues 215–221 (TKLDLMD) and 246–249 (NRSQ) each bind GTP. The segment at 245–248 (VNRS) is G5 motif. The segment at 344 to 489 (YCNTIEGTAK…NEMVHNLVAI (146 aa)) is middle domain. The interval 448–685 (NYSTQELLRF…NHVKDTLQSE (238 aa)) is interaction with GSK3B. Residues 502–569 (ADACGLMNNN…IQDSRRETKN (68 aa)) form a b domain region. A disordered region spans residues 523-590 (ELPSAVSRDK…VQEPTTGNWR (68 aa)). The residue at position 529 (Ser529) is a Phosphoserine. Glycyl lysine isopeptide (Lys-Gly) (interchain with G-Cter in SUMO) cross-links involve residues Lys532 and Lys535. Low complexity predominate over residues 537 to 554 (PSALAPASQEPSPAASAE). Ser548 is subject to Phosphoserine. The segment covering 555-568 (ADGKLIQDSRRETK) has biased composition (basic and acidic residues). Glycyl lysine isopeptide (Lys-Gly) (interchain with G-Cter in SUMO) cross-links involve residues Lys558 and Lys568. Residues Thr585 and Thr586 are each glycosylated (O-linked (GlcNAc) threonine). Lys594 is covalently cross-linked (Glycyl lysine isopeptide (Lys-Gly) (interchain with G-Cter in SUMO)). Residue Lys597 is modified to N6-acetyllysine; alternate. A Glycyl lysine isopeptide (Lys-Gly) (interchain with G-Cter in SUMO); alternate cross-link involves residue Lys597. Lys606 is covalently cross-linked (Glycyl lysine isopeptide (Lys-Gly) (interchain with G-Cter in SUMO)). Ser607 is subject to Phosphoserine. Lys608 participates in a covalent cross-link: Glycyl lysine isopeptide (Lys-Gly) (interchain with G-Cter in SUMO). At Ser616 the chain carries Phosphoserine; by CDK1 and PINK1. Ser637 is modified (phosphoserine; by CAMK1 and PKA). S-nitrosocysteine is present on Cys644. A GED domain is found at 644 to 735 (CEVIERLIKS…IIAEIRETHL (92 aa)). The important for homodimerization stretch occupies residues 654–668 (YFLIVRKNIQDSVPK).

It belongs to the TRAFAC class dynamin-like GTPase superfamily. Dynamin/Fzo/YdjA family. In terms of assembly, homotetramer; dimerizes through the N-terminal GTP-middle region of one molecule binding to the GED domain of another DNM1L molecule. Oligomerizes in a GTP-dependent manner to form membrane-associated tubules with a spiral pattern. Interacts with GSK3B and MARCHF5. Interacts (via the GTPase and B domains) with UBE2I; the interaction promotes sumoylation of DNM1L, mainly in its B domain. Interacts with PPP3CA; the interaction dephosphorylates DNM1L and regulates its transition to mitochondria. Interacts with BCL2L1 isoform BCL-X(L) and CLTA; DNM1L and BCL2L1 isoform BCL-X(L) may form a complex in synaptic vesicles that also contains clathrin and MFF. Interacts with MFF; the interaction is inhibited by C11orf65/MFI. Interacts with FIS1; may form part of a larger protein complex at the endoplasmic reticulum-mitochondrial interface during mitochondrial fission. Interacts with CANX. Interacts with BCAP31. Interacts with MIEF2 and MIEF1; GTP-dependent, regulates GTP hydrolysis and DNM1L oligomerization. Interacts with PGAM5; this interaction leads to dephosphorylation at Ser-656 and activation of GTPase activity and eventually to mitochondria fragmentation. Interacts with RALBP1; during mitosis, recruits DNM1L to the mitochondrion and mediates its activation by the mitotic kinase cyclin B-CDK1. Interacts with FUNDC1; this interaction recruits DNM1L/DRP1 at ER-mitochondria contact sites. Phosphorylation/dephosphorylation events on two sites near the GED domain regulate mitochondrial fission. Phosphorylation on Ser-637 by CAMK1 and PKA inhibits the GTPase activity, leading to a defect in mitochondrial fission promoting mitochondrial elongation. Dephosphorylated on this site by PPP3CA which promotes mitochondrial fission. Phosphorylation on Ser-616 by CDK1 and PINK1 activates the GTPase activity and promotes mitochondrial fission. Phosphorylated in a circadian manner at Ser-637. Dephosphorylated by PGAM5. Post-translationally, sumoylated on various lysine residues within the B domain, probably by MUL1. Sumoylation positively regulates mitochondrial fission. Desumoylated by SENP5 during G2/M transition of mitosis. Appears to be linked to its catalytic activity. In terms of processing, S-nitrosylation increases DNM1L dimerization, mitochondrial fission and causes neuronal damage. Ubiquitination by MARCHF5 affects mitochondrial morphology. Post-translationally, O-GlcNAcylation augments the level of the GTP-bound active form of DNM1L and induces translocation from the cytoplasm to mitochondria in cardiomyocytes. It also decreases phosphorylation at Ser-637. In terms of tissue distribution, ubiquitously expressed with highest levels found in skeletal muscles, heart, kidney and brain. Isoform 1 is brain-specific. Isoform 2 and isoform 3 are predominantly expressed in testis and skeletal muscles respectively. Isoform 4 is weakly expressed in brain, heart and kidney. Isoform 5 is dominantly expressed in liver, heart and kidney. Isoform 6 is expressed in neurons.

It localises to the cytoplasm. It is found in the cytosol. Its subcellular location is the golgi apparatus. The protein resides in the endomembrane system. The protein localises to the mitochondrion outer membrane. It localises to the peroxisome. It is found in the membrane. Its subcellular location is the clathrin-coated pit. The protein resides in the cytoplasmic vesicle. The protein localises to the secretory vesicle. It localises to the synaptic vesicle membrane. It carries out the reaction GTP + H2O = GDP + phosphate + H(+). With respect to regulation, GTPase activity is increased by binding to phospholipid membranes. Functions in mitochondrial and peroxisomal division. Mediates membrane fission through oligomerization into membrane-associated tubular structures that wrap around the scission site to constrict and sever the mitochondrial membrane through a GTP hydrolysis-dependent mechanism. The specific recruitment at scission sites is mediated by membrane receptors like MFF, MIEF1 and MIEF2 for mitochondrial membranes. While the recruitment by the membrane receptors is GTP-dependent, the following hydrolysis of GTP induces the dissociation from the receptors and allows DNM1L filaments to curl into closed rings that are probably sufficient to sever a double membrane. Acts downstream of PINK1 to promote mitochondrial fission in a PRKN-dependent manner. Plays an important role in mitochondrial fission during mitosis. Through its function in mitochondrial division, ensures the survival of at least some types of postmitotic neurons, including Purkinje cells, by suppressing oxidative damage. Required for normal brain development, including that of cerebellum. Facilitates developmentally regulated apoptosis during neural tube formation. Required for a normal rate of cytochrome c release and caspase activation during apoptosis; this requirement may depend upon the cell type and the physiological apoptotic cues. Required for formation of endocytic vesicles. Proposed to regulate synaptic vesicle membrane dynamics through association with BCL2L1 isoform Bcl-X(L) which stimulates its GTPase activity in synaptic vesicles; the function may require its recruitment by MFF to clathrin-containing vesicles. Required for programmed necrosis execution. Rhythmic control of its activity following phosphorylation at Ser-637 is essential for the circadian control of mitochondrial ATP production. In terms of biological role, inhibits peroxisomal division when overexpressed. The sequence is that of Dynamin-1-like protein from Homo sapiens (Human).